The sequence spans 410 residues: Exodeoxyribonuclease 7 large subunit (410 aa).

Belongs to the XseA family. In terms of assembly, heterooligomer composed of large and small subunits.

Its subcellular location is the cytoplasm. It carries out the reaction Exonucleolytic cleavage in either 5'- to 3'- or 3'- to 5'-direction to yield nucleoside 5'-phosphates.. Bidirectionally degrades single-stranded DNA into large acid-insoluble oligonucleotides, which are then degraded further into small acid-soluble oligonucleotides. In Alkaliphilus metalliredigens (strain QYMF), this protein is Exodeoxyribonuclease 7 large subunit.